Reading from the N-terminus, the 622-residue chain is V-type ATP synthase subunit I 1 (622 aa).

Transmembrane regions (helical) follow at residues 306–326, 328–348, 373–393, 428–448, 459–479, 485–505, 532–552, and 562–582; these read WVNL…YWEV, ISGF…ADAG, PAWC…ALVC, QMHV…LIVV, AEFG…NLIV, PLTG…FIFV, VFAD…GGAI, and PLFA…GHGL.

The protein belongs to the V-ATPase 116 kDa subunit family.

The protein localises to the cell membrane. Produces ATP from ADP in the presence of a proton gradient across the membrane. This is V-type ATP synthase subunit I 1 (atpI1) from Treponema pallidum (strain Nichols).